We begin with the raw amino-acid sequence, 927 residues long: Ribosome-releasing factor 2, mitochondrial (927 aa).

Residues 1–57 constitute a mitochondrion transit peptide; it reads MVTAPLLGWVAVRPIPRLSKLNTCKYVSSSLQSYKRSVGSCLGKQQSRDFSYSATLT. The tr-type G domain maps to 64–379; the sequence is EKTRNIGIIA…AVNNLLPGPS (316 aa). Residues 73-80, 163-167, and 217-220 each bind GTP; these read AHIDAGKT, DTPGH, and NKLD.

The protein belongs to the TRAFAC class translation factor GTPase superfamily. Classic translation factor GTPase family. EF-G/EF-2 subfamily.

It localises to the mitochondrion. Mitochondrial GTPase that mediates the disassembly of ribosomes from messenger RNA at the termination of mitochondrial protein biosynthesis. Not involved in the GTP-dependent ribosomal translocation step during translation elongation. This Talaromyces marneffei (strain ATCC 18224 / CBS 334.59 / QM 7333) (Penicillium marneffei) protein is Ribosome-releasing factor 2, mitochondrial (mef2).